Here is an 84-residue protein sequence, read N- to C-terminus: Beta-mammal/insect toxin Ts1 (84 aa).

An N-terminal signal peptide occupies residues 1-20 (MKGMILFISCLLLIGIVVEC). The 62-residue stretch at 21–82 (KEGYLMDHEG…VWDRATNKCG (62 aa)) folds into the LCN-type CS-alpha/beta domain. 4 disulfide bridges follow: Cys-31/Cys-81, Cys-35/Cys-57, Cys-43/Cys-62, and Cys-47/Cys-64. A Cysteine amide modification is found at Cys-81.

Belongs to the long (4 C-C) scorpion toxin superfamily. Sodium channel inhibitor family. Post-translationally, C-terminal amidation is important for high activity. In terms of tissue distribution, expressed by the venom gland.

The protein localises to the secreted. Functionally, voltage-gated sodium channels (Nav) gating-modifier. Acts both as alpha- and beta-toxin, since it affects not only activation but also inactivation of Nav channels. Binds to Nav domain DII and impairs the four Nav channel voltage sensors movements. Depending on Nav channel subtypes tested, can also bind Nav domains DIII (low affinity) and DIV (very low affinity). Acts on almost all the Nav channels tested (mammalian Nav1.2/SCN2A, Nav1.3/SCN3A, Nav1.4/SCN4A, Nav1.5/SCN5A, Nav1.6/SCN8A, Nav1.9/SCN11A, and insect DmNav1). Is highly active against both mammals and insects. Irreversibly modulates DmNav channels. Other Ts1 activities have been studied, such as immunomodulation, antimicrobial activity or exocrine secretion. This toxin exhibits an antifungal activity against filamentous fungi. In vitro, it has an important immunomodulatory effect on macrophages by stimulating the release of pro-inflammatory cytokines. It also shows an activity in exocrine secretion in pancreas, stomach and adrenal gland. This Tityus serrulatus (Brazilian scorpion) protein is Beta-mammal/insect toxin Ts1.